We begin with the raw amino-acid sequence, 281 residues long: Protein ZAR1-like 1.L (281 aa).

The segment at 183–267 (QKYGFFHCKN…QELCGRCKGQ (85 aa)) adopts a 3CxxC-type zinc-finger fold.

This sequence belongs to the ZAR1 family. Component of a cytoplasmic ribonucleoprotein complex together with eif4enif1/4E-T and cpeb1. In terms of tissue distribution, expressed in oocytes.

It is found in the cytoplasm. Its subcellular location is the cytoplasmic ribonucleoprotein granule. Functionally, mRNA-binding protein required for maternal mRNA storage, translation and degradation during oocyte maturation. Controls timing of meiosis during oogenesis. Probably promotes formation of some phase-separated membraneless compartment that stores maternal mRNAs in oocytes: acts by undergoing liquid-liquid phase separation upon binding to maternal mRNAs. Binds to the 3'-UTR of maternal mRNAs, inhibiting their translation. This Xenopus laevis (African clawed frog) protein is Protein ZAR1-like 1.L.